Reading from the N-terminus, the 291-residue chain is Transmembrane protein 41B (291 aa).

Basic and acidic residues predominate over residues 1–11 (MAKGRVADRSP). Positions 1–43 (MAKGRVADRSPTEMLHSTPAGDRAVRTQGSAAPGSKDHLNEKP) are disordered. A Phosphothreonine modification is found at Thr18. Position 35 is a phosphoserine (Ser35). 6 consecutive transmembrane segments (helical) span residues 52–72 (TSLL…FLVY), 109–129 (FYVQ…TFAI), 147–169 (LALF…LSYL), 197–217 (LINY…FINI), 225–245 (PLKV…FVAI), and 262–282 (SWSS…PAIF). The tract at residues 140-251 (GFLYPFPLAL…FVAIKAGTTL (112 aa)) is VTT domain; required for its function in autophagy.

This sequence belongs to the TMEM41 family. In terms of assembly, interacts with VMP1. Interacts with COPA, COPB1, VDAC1 and ERLIN2. Interacts with ATG2A. Interacts with SURF4. As to expression, expressed in brain, spinal cord, kidney and first lumbar dorsal root ganglia during postnatal development. Expressed in motor neurons and proprioceptive neurons.

The protein resides in the endoplasmic reticulum membrane. Its subcellular location is the endomembrane system. It catalyses the reaction a 1,2-diacyl-sn-glycero-3-phospho-L-serine(in) = a 1,2-diacyl-sn-glycero-3-phospho-L-serine(out). The enzyme catalyses cholesterol(in) = cholesterol(out). It carries out the reaction a 1,2-diacyl-sn-glycero-3-phosphocholine(in) = a 1,2-diacyl-sn-glycero-3-phosphocholine(out). The catalysed reaction is a 1,2-diacyl-sn-glycero-3-phosphoethanolamine(in) = a 1,2-diacyl-sn-glycero-3-phosphoethanolamine(out). Functionally, phospholipid scramblase involved in lipid homeostasis and membrane dynamics processes. Has phospholipid scramblase activity toward cholesterol and phosphatidylserine, as well as phosphatidylethanolamine and phosphatidylcholine. Required for autophagosome formation: participates in early stages of autophagosome biogenesis at the endoplasmic reticulum (ER) membrane by reequilibrating the leaflets of the ER as lipids are extracted by ATG2 (ATG2A or ATG2B) to mediate autophagosome assembly. In addition to autophagy, involved in other processes in which phospholipid scramblase activity is required. Required for normal motor neuron development. The chain is Transmembrane protein 41B from Mus musculus (Mouse).